Consider the following 594-residue polypeptide: Invasin CotH2 (594 aa).

The signal sequence occupies residues 1–19 (MKLSLTIVSSSFLVAIAHA). N-linked (GlcNAc...) asparagine glycosylation is found at Asn77, Asn162, Asn226, Asn316, Asn441, Asn519, and Asn533. The segment at 529–565 (PPAANGTATSTNDGGNTHTAAGESKPASSSESSGSKI) is disordered. Residues 534-547 (GTATSTNDGGNTHT) are compositionally biased toward polar residues. Low complexity predominate over residues 548–565 (AAGESKPASSSESSGSKI). Ser571 carries the GPI-anchor amidated serine lipid modification. The propeptide at 572–594 (GASRSAVSTVLLGVTALVATAIF) is removed in mature form.

In terms of assembly, interacts with host epithelial cell surface HSPA5/BiP protein.

It localises to the cell membrane. Promotes invasion of host epithelial cells by adhering to receptors on the host cell surface to facilitate endocytosis of the pathogen into host cells. Binds HSPA5/BiP protein on the cell surface of host epithelial cells. The chain is Invasin CotH2 from Rhizopus delemar (strain RA 99-880 / ATCC MYA-4621 / FGSC 9543 / NRRL 43880) (Mucormycosis agent).